We begin with the raw amino-acid sequence, 179 residues long: Large ribosomal subunit protein uL6 (179 aa).

Belongs to the universal ribosomal protein uL6 family. In terms of assembly, part of the 50S ribosomal subunit.

In terms of biological role, this protein binds to the 23S rRNA, and is important in its secondary structure. It is located near the subunit interface in the base of the L7/L12 stalk, and near the tRNA binding site of the peptidyltransferase center. The polypeptide is Large ribosomal subunit protein uL6 (Syntrophomonas wolfei subsp. wolfei (strain DSM 2245B / Goettingen)).